Consider the following 302-residue polypeptide: Protoheme IX farnesyltransferase 1 (302 aa).

The next 8 membrane-spanning stretches (helical) occupy residues V27–F47, W49–F69, S98–V118, L121–L141, I149–G169, A175–I195, L228–F248, and I281–L301.

It belongs to the UbiA prenyltransferase family. Protoheme IX farnesyltransferase subfamily.

The protein localises to the cell inner membrane. It carries out the reaction heme b + (2E,6E)-farnesyl diphosphate + H2O = Fe(II)-heme o + diphosphate. The protein operates within porphyrin-containing compound metabolism; heme O biosynthesis; heme O from protoheme: step 1/1. Converts heme B (protoheme IX) to heme O by substitution of the vinyl group on carbon 2 of heme B porphyrin ring with a hydroxyethyl farnesyl side group. This chain is Protoheme IX farnesyltransferase 1, found in Vibrio parahaemolyticus serotype O3:K6 (strain RIMD 2210633).